Reading from the N-terminus, the 287-residue chain is Bifunctional protein FolD (287 aa).

Residues 166–168 (GAS) and Ile-232 each bind NADP(+).

The protein belongs to the tetrahydrofolate dehydrogenase/cyclohydrolase family. Homodimer.

The catalysed reaction is (6R)-5,10-methylene-5,6,7,8-tetrahydrofolate + NADP(+) = (6R)-5,10-methenyltetrahydrofolate + NADPH. The enzyme catalyses (6R)-5,10-methenyltetrahydrofolate + H2O = (6R)-10-formyltetrahydrofolate + H(+). It participates in one-carbon metabolism; tetrahydrofolate interconversion. Catalyzes the oxidation of 5,10-methylenetetrahydrofolate to 5,10-methenyltetrahydrofolate and then the hydrolysis of 5,10-methenyltetrahydrofolate to 10-formyltetrahydrofolate. The sequence is that of Bifunctional protein FolD from Buchnera aphidicola subsp. Baizongia pistaciae (strain Bp).